We begin with the raw amino-acid sequence, 189 residues long: Elongation factor P (189 aa).

This sequence belongs to the elongation factor P family.

The protein resides in the cytoplasm. The protein operates within protein biosynthesis; polypeptide chain elongation. Involved in peptide bond synthesis. Stimulates efficient translation and peptide-bond synthesis on native or reconstituted 70S ribosomes in vitro. Probably functions indirectly by altering the affinity of the ribosome for aminoacyl-tRNA, thus increasing their reactivity as acceptors for peptidyl transferase. This Ehrlichia chaffeensis (strain ATCC CRL-10679 / Arkansas) protein is Elongation factor P.